The sequence spans 129 residues: MLKQSKKSSKKLKKSVIDGLIIINSTFNNTIVTATDCYGKVIAWASGGTEGFKGAKKGTPFAAQSATEKLIKALLEQGTQRIHISVSGPGPGRETSIRSFQTSGLQIISIKDITSVPFNGCRPPKKRRI.

The protein belongs to the universal ribosomal protein uS11 family. In terms of assembly, part of the 30S ribosomal subunit.

The protein localises to the plastid. Its subcellular location is the chloroplast. The sequence is that of Small ribosomal subunit protein uS11c from Cyanidium caldarium (Red alga).